The primary structure comprises 600 residues: Oligopeptide-binding protein OppA (600 aa).

Positions 1-22 (MNKLKVTLLASSVVLAATLLSA) are cleaved as a signal peptide. A lipid anchor (N-palmitoyl cysteine) is attached at Cys23. Residue Cys23 is the site of S-diacylglycerol cysteine attachment.

The protein belongs to the bacterial solute-binding protein 5 family. The complex is composed of two ATP-binding proteins (OppD and OppF), two transmembrane proteins (OppB and OppC) and a solute-binding protein (OppA).

It is found in the cell membrane. Its function is as follows. Part of the ABC transporter complex OppABCDF involved in the uptake of oligopeptides. Essential for uptake of peptides larger than three amino acids and for growth in milk. This Lactococcus lactis subsp. lactis (Streptococcus lactis) protein is Oligopeptide-binding protein OppA.